A 146-amino-acid polypeptide reads, in one-letter code: Antirestriction protein KlcA (146 aa).

The protein belongs to the antirestriction protein family.

Its function is as follows. Could be involved in overcoming restriction barriers during establishment after conjugative transfer. This Escherichia coli protein is Antirestriction protein KlcA (klcA).